The following is a 209-amino-acid chain: Octanoyltransferase (209 aa).

Residues 30-209 enclose the BPL/LPL catalytic domain; that stretch reads DHEPEIIYLV…IQTEFNKIFK (180 aa). Residues 69-76, 143-145, and 156-158 contribute to the substrate site; these read RGGKFTFH, AIG, and GVA. Residue cysteine 174 is the Acyl-thioester intermediate of the active site.

Belongs to the LipB family.

The protein resides in the cytoplasm. The enzyme catalyses octanoyl-[ACP] + L-lysyl-[protein] = N(6)-octanoyl-L-lysyl-[protein] + holo-[ACP] + H(+). It functions in the pathway protein modification; protein lipoylation via endogenous pathway; protein N(6)-(lipoyl)lysine from octanoyl-[acyl-carrier-protein]: step 1/2. Its function is as follows. Catalyzes the transfer of endogenously produced octanoic acid from octanoyl-acyl-carrier-protein onto the lipoyl domains of lipoate-dependent enzymes. Lipoyl-ACP can also act as a substrate although octanoyl-ACP is likely to be the physiological substrate. This is Octanoyltransferase from Rickettsia peacockii (strain Rustic).